The following is a 618-amino-acid chain: Vacuolar-sorting receptor 5 (618 aa).

Positions 1–23 (MSPSNKGTVLALILALTMVVVNG) are cleaved as a signal peptide. Residues 24–563 (FSSRFFVEKS…IERRSGSRSR (540 aa)) lie on the Lumenal side of the membrane. In terms of domain architecture, PA spans 58–164 (KYGGFMIGSV…SFGDSLKKAL (107 aa)). Residues asparagine 81, asparagine 293, and asparagine 430 are each glycosylated (N-linked (GlcNAc...) asparagine). EGF-like domains are found at residues 412–462 (ETNE…TSCK) and 465–511 (GPAR…LKCE). Disulfide bonds link cysteine 416–cysteine 434, cysteine 423–cysteine 443, cysteine 445–cysteine 461, cysteine 469–cysteine 489, cysteine 476–cysteine 497, cysteine 499–cysteine 510, and cysteine 540–cysteine 553. Residues 512-554 (DIDECKEKSACKCDGCKCKNNWGGYECKCSNNSIYMKEEDTCI) form the EGF-like 3; calcium-binding domain. Asparagine 542 carries N-linked (GlcNAc...) asparagine glycosylation. The chain crosses the membrane as a helical span at residues 564–584 (GLFTIVVLTAIAGISLGAYIF). The Cytoplasmic segment spans residues 585–618 (YKYHLQSYMDSEIVSIMSQYIPLDSQSINQDSFK). Residues 604–607 (YIPL) carry the Tyrosine-based internalization motif motif.

This sequence belongs to the VSR (BP-80) family. In terms of tissue distribution, expressed in seedlings, roots, leaves, flowers and siliques.

Its subcellular location is the membrane. It localises to the golgi apparatus membrane. The protein resides in the cytoplasmic vesicle. It is found in the clathrin-coated vesicle membrane. The protein localises to the prevacuolar compartment membrane. Vacuolar-sorting receptor (VSR) involved in clathrin-coated vesicles sorting from Golgi apparatus to vacuoles. This Arabidopsis thaliana (Mouse-ear cress) protein is Vacuolar-sorting receptor 5 (VSR5).